A 650-amino-acid chain; its full sequence is Acetyl-coenzyme A synthetase (650 aa).

CoA is bound by residues 191–194 (RGGR), Thr311, and Asn335. Residues 387–389 (GEP), 411–416 (DTWWQT), Asp500, and Arg515 each bind ATP. Ser523 provides a ligand contact to CoA. Residue Arg526 participates in ATP binding. Positions 537, 539, and 542 each coordinate Mg(2+). Arg584 is a binding site for CoA. Lys609 is modified (N6-acetyllysine).

Belongs to the ATP-dependent AMP-binding enzyme family. Mg(2+) is required as a cofactor. Acetylated. Deacetylation by the SIR2-homolog deacetylase activates the enzyme.

It catalyses the reaction acetate + ATP + CoA = acetyl-CoA + AMP + diphosphate. Its function is as follows. Catalyzes the conversion of acetate into acetyl-CoA (AcCoA), an essential intermediate at the junction of anabolic and catabolic pathways. AcsA undergoes a two-step reaction. In the first half reaction, AcsA combines acetate with ATP to form acetyl-adenylate (AcAMP) intermediate. In the second half reaction, it can then transfer the acetyl group from AcAMP to the sulfhydryl group of CoA, forming the product AcCoA. The chain is Acetyl-coenzyme A synthetase from Shewanella frigidimarina (strain NCIMB 400).